We begin with the raw amino-acid sequence, 375 residues long: Alcohol dehydrogenase 1 (375 aa).

N-acetylserine is present on serine 1. 7 residues coordinate Zn(2+): cysteine 46, histidine 67, cysteine 97, cysteine 100, cysteine 103, cysteine 111, and cysteine 175. NAD(+) contacts are provided by residues 200-205, aspartate 224, lysine 229, 293-295, and arginine 370; these read GLGGVG and VGV.

This sequence belongs to the zinc-containing alcohol dehydrogenase family. Class-I subfamily. As to quaternary structure, homodimer. Requires Zn(2+) as cofactor.

It is found in the cytoplasm. It catalyses the reaction a primary alcohol + NAD(+) = an aldehyde + NADH + H(+). It carries out the reaction a secondary alcohol + NAD(+) = a ketone + NADH + H(+). The polypeptide is Alcohol dehydrogenase 1 (ADH1) (Coturnix japonica (Japanese quail)).